The primary structure comprises 31 residues: MEALVYVFLLTGTLMVIFFAIFFREPPRIAK.

A helical membrane pass occupies residues 3–23 (ALVYVFLLTGTLMVIFFAIFF).

Belongs to the PsbT family. In terms of assembly, PSII is composed of 1 copy each of membrane proteins PsbA, PsbB, PsbC, PsbD, PsbE, PsbF, PsbH, PsbI, PsbJ, PsbK, PsbL, PsbM, PsbT, PsbX, PsbY, PsbZ, Psb30/Ycf12, at least 3 peripheral proteins of the oxygen-evolving complex and a large number of cofactors. It forms dimeric complexes.

The protein localises to the plastid. Its subcellular location is the chloroplast thylakoid membrane. In terms of biological role, found at the monomer-monomer interface of the photosystem II (PS II) dimer, plays a role in assembly and dimerization of PSII. PSII is a light-driven water plastoquinone oxidoreductase, using light energy to abstract electrons from H(2)O, generating a proton gradient subsequently used for ATP formation. The protein is Photosystem II reaction center protein T of Pyropia yezoensis (Susabi-nori).